Here is a 295-residue protein sequence, read N- to C-terminus: Small ribosomal subunit protein uS2 (295 aa).

The tract at residues 263-295 is disordered; it reads KKFSKTKNIDEETNTEFEQALNDADENKNSDNA.

It belongs to the universal ribosomal protein uS2 family.

The chain is Small ribosomal subunit protein uS2 from Rickettsia massiliae (strain Mtu5).